An 89-amino-acid polypeptide reads, in one-letter code: Small ribosomal subunit protein uS14 (89 aa).

Belongs to the universal ribosomal protein uS14 family. As to quaternary structure, part of the 30S ribosomal subunit. Contacts proteins S3 and S10.

Binds 16S rRNA, required for the assembly of 30S particles and may also be responsible for determining the conformation of the 16S rRNA at the A site. This is Small ribosomal subunit protein uS14 from Acholeplasma laidlawii (strain PG-8A).